A 317-amino-acid polypeptide reads, in one-letter code: uncharacterized protein (317 aa).

The N-terminal stretch at M1–A16 is a signal peptide. An N-linked (GlcNAc...) asparagine glycan is attached at N42. 2 stretches are compositionally biased toward low complexity: residues S150 to S238 and T247 to A259. The disordered stretch occupies residues S150–A259.

This is an uncharacterized protein from Schizosaccharomyces pombe (strain 972 / ATCC 24843) (Fission yeast).